A 299-amino-acid polypeptide reads, in one-letter code: tRNA dimethylallyltransferase (299 aa).

13 to 20 provides a ligand contact to ATP; sequence GPTASGKT. 15–20 is a binding site for substrate; that stretch reads TASGKT. Residues 38-41 are interaction with substrate tRNA; it reads DSRQ.

Belongs to the IPP transferase family. In terms of assembly, monomer. Mg(2+) serves as cofactor.

The enzyme catalyses adenosine(37) in tRNA + dimethylallyl diphosphate = N(6)-dimethylallyladenosine(37) in tRNA + diphosphate. Functionally, catalyzes the transfer of a dimethylallyl group onto the adenine at position 37 in tRNAs that read codons beginning with uridine, leading to the formation of N6-(dimethylallyl)adenosine (i(6)A). The chain is tRNA dimethylallyltransferase from Parasynechococcus marenigrum (strain WH8102).